The sequence spans 89 residues: Putative defensin-like protein 254 (89 aa).

The signal sequence occupies residues 1 to 20; it reads MHNISFKLLLLCDLFLSSSS. 2 disulfides stabilise this stretch: Cys31-Cys48 and Cys37-Cys55.

This sequence belongs to the DEFL family.

It localises to the secreted. The sequence is that of Putative defensin-like protein 254 from Arabidopsis thaliana (Mouse-ear cress).